The sequence spans 263 residues: Putative steroid dehydrogenase 4 (263 aa).

The active-site Proton acceptor is the Y154.

This sequence belongs to the short-chain dehydrogenases/reductases (SDR) family. 17-beta-HSD 3 subfamily.

The polypeptide is Putative steroid dehydrogenase 4 (stdh-4) (Caenorhabditis elegans).